Reading from the N-terminus, the 362-residue chain is MQVTAPRTVLLLLSAALALTETWAGSHSMKYFYTAVSRPGRGEPRFISVGYVDDTQFVWFDSDAASPREEPRAPWIEQEGPEYWDRETQISKTNAQTYRESLRNLRGYYNQSEAGSHIIQRMYGCDMGPDGRLLRGYEQYAYDGKDYIALNQDLSSWTAADTAAQITQRKWEAARWAEQLRAYLEGTCVEWLRRYLENGKETLQRADPPKTHVTHHPISDHEATLRCWALGFYPAEITLTWQRDGEDQTQDTELVETRPAGDRTFQKWAAVVVPSGEEQRYTCHVQHEGLPKPLTLRWEPSSQSTIPIVGIVAGLAVLAVVVIGAVVAAVMCRRKSSGGKGGSYSQAASSDSAQGSDVSLTA.

The N-terminal stretch at 1–24 (MQVTAPRTVLLLLSAALALTETWA) is a signal peptide. The alpha-1 stretch occupies residues 25-114 (GSHSMKYFYT…LRGYYNQSEA (90 aa)). Topologically, residues 25–308 (GSHSMKYFYT…EPSSQSTIPI (284 aa)) are extracellular. N-linked (GlcNAc...) asparagine glycosylation is present at Asn110. The segment at 115–206 (GSHIIQRMYG…ENGKETLQRA (92 aa)) is alpha-2. 2 disulfides stabilise this stretch: Cys125-Cys188 and Cys227-Cys283. The alpha-3 stretch occupies residues 207–298 (DPPKTHVTHH…GLPKPLTLRW (92 aa)). The 87-residue stretch at 209-295 (PKTHVTHHPI…QHEGLPKPLT (87 aa)) folds into the Ig-like C1-type domain. A connecting peptide region spans residues 299–308 (EPSSQSTIPI). Residues 309–332 (VGIVAGLAVLAVVVIGAVVAAVMC) form a helical membrane-spanning segment. Residues 333-362 (RRKSSGGKGGSYSQAASSDSAQGSDVSLTA) are Cytoplasmic-facing. The disordered stretch occupies residues 336-362 (SSGGKGGSYSQAASSDSAQGSDVSLTA). At Ser343 the chain carries Phosphoserine. The span at 343–362 (SYSQAASSDSAQGSDVSLTA) shows a compositional bias: low complexity. Tyr344 is modified (phosphotyrosine). Phosphoserine occurs at positions 345, 349, 350, 352, 356, and 359.

Belongs to the MHC class I family. As to quaternary structure, heterodimer of an alpha chain and a beta chain (beta-2-microglobulin).

Its subcellular location is the membrane. In terms of biological role, involved in the presentation of foreign antigens to the immune system. This is Patr class I histocompatibility antigen, A-5 alpha chain from Pan troglodytes (Chimpanzee).